Reading from the N-terminus, the 351-residue chain is Cytochrome c biogenesis protein CcsA (351 aa).

A run of 8 helical transmembrane segments spans residues 17–37 (VLFLTMLLYWIGAAFPGLPAI), 38–58 (NALGTAGMAIANLSIATLLGA), 68–88 (LSNLYESLFFLSWGITTVHLI), 97–117 (LVGVFTTPVAMGIVAFATLTL), 143–163 (MMLSYSALMVGSLLAIAFLVI), 259–279 (IIGLGFPLLTIGIIAGAVWAN), 286–306 (WSWDPKETWALITWLVFAAYL), and 320–340 (AILAASGFVVVWICYLGVNLL).

The protein belongs to the CcmF/CycK/Ccl1/NrfE/CcsA family. In terms of assembly, may interact with ccs1.

The protein resides in the cellular thylakoid membrane. Required during biogenesis of c-type cytochromes (cytochrome c6 and cytochrome f) at the step of heme attachment. This is Cytochrome c biogenesis protein CcsA from Trichormus variabilis (strain ATCC 29413 / PCC 7937) (Anabaena variabilis).